The primary structure comprises 391 residues: Chorismate synthase (391 aa).

2 residues coordinate NADP(+): R39 and R45. Residues 133 to 135 (RAS), 254 to 255 (QA), G299, 314 to 318 (KPIAT), and R340 each bind FMN.

The protein belongs to the chorismate synthase family. As to quaternary structure, homotetramer. The cofactor is FMNH2.

The enzyme catalyses 5-O-(1-carboxyvinyl)-3-phosphoshikimate = chorismate + phosphate. The protein operates within metabolic intermediate biosynthesis; chorismate biosynthesis; chorismate from D-erythrose 4-phosphate and phosphoenolpyruvate: step 7/7. Catalyzes the anti-1,4-elimination of the C-3 phosphate and the C-6 proR hydrogen from 5-enolpyruvylshikimate-3-phosphate (EPSP) to yield chorismate, which is the branch point compound that serves as the starting substrate for the three terminal pathways of aromatic amino acid biosynthesis. This reaction introduces a second double bond into the aromatic ring system. The sequence is that of Chorismate synthase from Symbiobacterium thermophilum (strain DSM 24528 / JCM 14929 / IAM 14863 / T).